A 481-amino-acid polypeptide reads, in one-letter code: Abl interactor 1 (481 aa).

Alanine 2 is modified (N-acetylalanine). Positions 18–79 (ALIESYQNLT…NNVLQLLDIQ (62 aa)) are required for binding to WASF1. Positions 45–107 (KALEETKAYT…DIHKEKVARR (63 aa)) constitute a t-SNARE coiled-coil homology domain. At tyrosine 53 the chain carries Phosphotyrosine. The interval 158–285 (AKHGNNQPAR…PGAAPGSQYG (128 aa)) is disordered. The segment covering 161-175 (GNNQPARTGTLSRTN) has biased composition (polar residues). Threonine 174 and threonine 178 each carry phosphothreonine. A phosphoserine mark is found at serine 183 and serine 187. Tyrosine 213 is modified (phosphotyrosine). Threonine 215 carries the post-translational modification Phosphothreonine. Residues serine 216, serine 222, and serine 225 each carry the phosphoserine modification. Residues 222 to 235 (SQHSPGRTASLNQR) are compositionally biased toward polar residues. Composition is skewed to low complexity over residues 248 to 258 (SRENSGSSSIG) and 272 to 282 (GPAAPGAAPGS). Phosphoserine occurs at positions 292 and 296. Disordered regions lie at residues 318–348 (AQPH…LTPQ) and 361–392 (NIAD…PPPV). 2 stretches are compositionally biased toward pro residues: residues 366-376 (PTPPPPPPPDD) and 383-392 (SPPPPPPPPV). Residues 419 to 478 (NYIEKVVAIYDYTKDKDDELSFKEGAIIYVIKKNDDGWFEGVCNRVTGLFPGNYVESIMH) enclose the SH3 domain. Phosphotyrosine is present on tyrosine 428. Residue serine 439 is modified to Phosphoserine. Threonine 480 carries the post-translational modification Phosphothreonine.

This sequence belongs to the ABI family. In terms of assembly, interacts with ENAH, Abelson murine leukemia virus V-ABL, ABL1, STX1A, SNAP25, VAMP2, and through its N-terminus with WASF1. Part of a complex consisting of ABI1, STX1A and SNAP25. Part of a complex consisting of ABI1, EPS8 and SOS1. Interacts with EPS8, SOS1, SOS2, GRB2, SPTA1, and the first SH3 domain of NCK1. Component of the WAVE2 complex composed of ABI1, CYFIP1/SRA1, NCKAP1/NAP1 (NCKAP1l/HEM1 in hematopoietic cells) and WASF2/WAVE2. Interacts (via SH3 domain) with SHANK2 and SHANK3, but not SHANK1; the interaction is direct. Interacts with the heterodimer MYC:MAX; the interaction may enhance MYC:MAX transcriptional activity. Interacts with FNBP1L (via the SH3 domain), WASF2, and CDC42, but only in the presence of FNBP1L. In terms of processing, phosphorylated on tyrosine residues after serum stimulation or induction by v-Abl. Seems to be phosphorylated at Tyr-53 by ABL1, required for nuclear but not for synaptic localization. In terms of tissue distribution, widely expressed with highest levels in bone marrow, spleen, brain, testes, and embryonic brain. In adult brain prominently expressed in the neocortex, hippocampus and dentate gyrus.

The protein resides in the cytoplasm. It localises to the nucleus. The protein localises to the cell projection. Its subcellular location is the lamellipodium. It is found in the filopodium. The protein resides in the growth cone. It localises to the postsynaptic density. The protein localises to the cytoskeleton. May act in negative regulation of cell growth and transformation by interacting with nonreceptor tyrosine kinases ABL1 and/or ABL2. In vitro, at least isoform 2 and isoform 4 suppress the transforming activity of Abelson murine leukemia virus (v-Abl) after overexpression in fibroblasts. May play a role in regulation EGF-induced Erk pathway activation. Involved in cytoskeletal reorganization and EGFR signaling. Together with EPS8 participates in transduction of signals from Ras to Rac. In vitro, a trimeric complex of ABI1, EPS8 and SOS1 exhibits Rac specific guanine nucleotide exchange factor (GEF) activity and ABI1 seems to act as an adapter in the complex. Regulates ABL1/c-Abl-mediated phosphorylation of ENAH. Recruits WASF1 to lamellipodia and there seems to regulate WASF1 protein level. In brain, seems to regulate the dendritic outgrowth and branching as well as to determine the shape and number of synaptic contacts of developing neurons. This is Abl interactor 1 from Mus musculus (Mouse).